We begin with the raw amino-acid sequence, 361 residues long: Phospho-N-acetylmuramoyl-pentapeptide-transferase (361 aa).

10 helical membrane-spanning segments follow: residues 28-48 (LAVL…IKFL), 74-94 (TMGG…LADL), 99-119 (IWIT…DDYA), 135-155 (LLLQ…TIDS), 167-187 (SLSM…IVGA), 203-223 (VPIA…GNLI), 236-256 (TGEL…FLWF), 263-283 (VFMG…ISVI), 288-308 (IVLG…IMQV), and 338-358 (KVVI…LSSL).

This sequence belongs to the glycosyltransferase 4 family. MraY subfamily. Mg(2+) is required as a cofactor.

The protein localises to the cell inner membrane. It carries out the reaction UDP-N-acetyl-alpha-D-muramoyl-L-alanyl-gamma-D-glutamyl-meso-2,6-diaminopimeloyl-D-alanyl-D-alanine + di-trans,octa-cis-undecaprenyl phosphate = di-trans,octa-cis-undecaprenyl diphospho-N-acetyl-alpha-D-muramoyl-L-alanyl-D-glutamyl-meso-2,6-diaminopimeloyl-D-alanyl-D-alanine + UMP. The protein operates within cell wall biogenesis; peptidoglycan biosynthesis. Catalyzes the initial step of the lipid cycle reactions in the biosynthesis of the cell wall peptidoglycan: transfers peptidoglycan precursor phospho-MurNAc-pentapeptide from UDP-MurNAc-pentapeptide onto the lipid carrier undecaprenyl phosphate, yielding undecaprenyl-pyrophosphoryl-MurNAc-pentapeptide, known as lipid I. This is Phospho-N-acetylmuramoyl-pentapeptide-transferase from Rickettsia bellii (strain RML369-C).